The chain runs to 109 residues: Parvalbumin, muscle (109 aa).

A1 is modified (N-acetylalanine). EF-hand domains lie at 38-73 (KSPE…FTPD) and 77-109 (LSDK…VAES). Ca(2+) contacts are provided by D51, D53, S55, E62, D90, D92, D94, K96, and E101.

The protein belongs to the parvalbumin family.

In terms of biological role, in muscle, parvalbumin is thought to be involved in relaxation after contraction. It binds two calcium ions. The polypeptide is Parvalbumin, muscle (Gallus gallus (Chicken)).